The primary structure comprises 729 residues: Cellulose synthase catalytic subunit [UDP-forming] (729 aa).

A run of 3 helical transmembrane segments spans residues 30 to 50 (LATWALWLLGALLLVFVVAVP), 110 to 130 (FILGLGLLGAELYAFVILVLG), and 171 to 191 (TTVLAASVIDWPAGKITIHLL). The catalytic subdomain A stretch occupies residues 151–244 (LWPSVDVFIP…YVAIFDCDHI (94 aa)). D193 is an active-site residue. D240 and D242 together coordinate substrate. A catalytic subdomain B region spans residues 321-381 (TALEEVGGVA…AQRIRWARGM (61 aa)). Residue D337 is part of the active site. 5 helical membrane passes run 405–425 (LNAMLHFFYGVPRIIYLTAPL), 427–447 (YLFFGAHVIQASALMILAYAL), 520–540 (LFLLLLNVVGMVAGVLRLIYV), 549–569 (IWFNLAWTLYNMVLLGATIAT), and 610–630 (MAIMLAQPQPIEPGLPVQIGL). The PilZ domain maps to 575-671 (QVRSAHRVPL…QERWLVASTF (97 aa)).

It belongs to the glycosyltransferase 2 family. Mg(2+) is required as a cofactor.

Its subcellular location is the cell inner membrane. The catalysed reaction is [(1-&gt;4)-beta-D-glucosyl](n) + UDP-alpha-D-glucose = [(1-&gt;4)-beta-D-glucosyl](n+1) + UDP + H(+). It functions in the pathway glycan metabolism; bacterial cellulose biosynthesis. Activated by bis-(3'-5') cyclic diguanylic acid (c-di-GMP). Functionally, catalytic subunit of cellulose synthase. It polymerizes uridine 5'-diphosphate glucose to cellulose, which is produced as an extracellular component for mechanical and chemical protection. The polypeptide is Cellulose synthase catalytic subunit [UDP-forming] (bcsA) (Xanthomonas axonopodis pv. citri (strain 306)).